A 304-amino-acid polypeptide reads, in one-letter code: Secreted mono- and diacylglycerol lipase MDL3 (304 aa).

A signal peptide spans 1 to 19 (MIVGPVISLLLSYFVLVSG). An intrachain disulfide couples cysteine 55 to cysteine 297. A glycan (N-linked (GlcNAc...) asparagine) is linked at asparagine 161. Catalysis depends on serine 171, which acts as the Nucleophile. Residues aspartate 228 and histidine 281 contribute to the active site.

This sequence belongs to the AB hydrolase superfamily. Lipase family. Class 3 subfamily.

The protein resides in the secreted. The protein localises to the cell wall. The enzyme catalyses a monoacylglycerol + H2O = glycerol + a fatty acid + H(+). It carries out the reaction a diacylglycerol + H2O = a monoacylglycerol + a fatty acid + H(+). Secreted lipase involved in Dandruff and seborrheic dermatitis (D/SD) probably via lipase-mediated breakdown of sebaceous lipids and release of irritating free fatty acids. Shows activity against monoglyceride and diglyceride substrates, but not triglyceride substrates and does not exhibit regio-selective production of diacylglycerols. Hydrolyzes distearin, dilinolein, dipalmitoylglycerol and dipalmitolein. Cleaves oleic acid from 1,2 isomers of diolein on both the 1 and the 2 position of the glycerol backbone, resulting mainly in free fatty acids but no monoolein is detected. Shows activity on monoolein and liberates mostly free fatty acids, but can also perform the reverse reaction and produce diolein. This is Secreted mono- and diacylglycerol lipase MDL3 from Malassezia globosa (strain ATCC MYA-4612 / CBS 7966) (Dandruff-associated fungus).